We begin with the raw amino-acid sequence, 44 residues long: Photosystem II reaction center protein J (44 aa).

A helical membrane pass occupies residues 12 to 32 (IPLWIVGFVVGSLALGLLGIL).

Belongs to the PsbJ family. In terms of assembly, PSII is composed of 1 copy each of membrane proteins PsbA, PsbB, PsbC, PsbD, PsbE, PsbF, PsbH, PsbI, PsbJ, PsbK, PsbL, PsbM, PsbT, PsbY, PsbZ, Psb30/Ycf12, at least 3 peripheral proteins of the oxygen-evolving complex and a large number of cofactors. It forms dimeric complexes.

It localises to the plastid. The protein localises to the chloroplast thylakoid membrane. Functionally, one of the components of the core complex of photosystem II (PSII). PSII is a light-driven water:plastoquinone oxidoreductase that uses light energy to abstract electrons from H(2)O, generating O(2) and a proton gradient subsequently used for ATP formation. It consists of a core antenna complex that captures photons, and an electron transfer chain that converts photonic excitation into a charge separation. This is Photosystem II reaction center protein J from Bigelowiella natans (Pedinomonas minutissima).